The chain runs to 251 residues: Dehydration-responsive element-binding protein 1I (251 aa).

The segment at 1–50 (MCTSKLEEITGEWPPPALQAASTTSSSEPCRRLSPPSSKRPAGRTKFHET) is disordered. Residues 54–114 (VFRGVRRRGR…GRAAACLNFA (61 aa)) constitute a DNA-binding region (AP2/ERF). A disordered region spans residues 169–198 (ATSEPSAASDDDAVTSSSSTTDADEEASPF).

This sequence belongs to the AP2/ERF transcription factor family. ERF subfamily.

Its subcellular location is the nucleus. Transcriptional activator that binds specifically to the DNA sequence 5'-[AG]CCGAC-3'. Binding to the C-repeat/DRE element mediates high salinity- and dehydration-inducible transcription. The chain is Dehydration-responsive element-binding protein 1I (DREB1I) from Oryza sativa subsp. japonica (Rice).